Here is a 219-residue protein sequence, read N- to C-terminus: Nuclear transcription factor Y subunit B-8 (219 aa).

Residues 1-26 (MPDSDNDSGGPSNYAGGELSSPREQD) form a disordered region. A DNA-binding region spans residues 29-35 (LPIANVS). The interval 56–67 (VQECVSEFISFI) is subunit association domain (SAD). Residues 119–134 (AAASTTGAGTSAASTT) are compositionally biased toward low complexity. Disordered stretches follow at residues 119 to 142 (AAASTTGAGTSAASTTPPQQQHTA) and 166 to 219 (GQPM…NRGA). The span at 190-206 (GGRGGFGHHPGGGGGGS) shows a compositional bias: gly residues.

The protein belongs to the NFYB/HAP3 subunit family. As to quaternary structure, heterotrimeric transcription factor composed of three components, NF-YA, NF-YB and NF-YC. NF-YB and NF-YC must interact and dimerize for NF-YA association and DNA binding. Interacts with NFYC2, NFYC4 and NFYC6.

It is found in the cytoplasm. Functionally, component of the NF-Y/HAP transcription factor complex. The sequence is that of Nuclear transcription factor Y subunit B-8 from Oryza sativa subsp. japonica (Rice).